The following is a 184-amino-acid chain: Protein PLANT CADMIUM RESISTANCE 4 (184 aa).

Residues 1–10 (MGRPGSQPNE) show a composition bias toward polar residues. The disordered stretch occupies residues 1–21 (MGRPGSQPNEAQPPPVQVQPT). A helical membrane pass occupies residues 96–116 (GGLLYGMIFFIGVPFVYSCMF).

Belongs to the cornifelin family.

Its subcellular location is the membrane. Its function is as follows. May be involved in heavy metals transport. In Arabidopsis thaliana (Mouse-ear cress), this protein is Protein PLANT CADMIUM RESISTANCE 4 (PCR4).